The following is a 179-amino-acid chain: Probable chorismate pyruvate-lyase (179 aa).

Residues Arg-82, Leu-120, and Glu-165 each contribute to the substrate site.

It belongs to the UbiC family.

It is found in the cytoplasm. The catalysed reaction is chorismate = 4-hydroxybenzoate + pyruvate. It participates in cofactor biosynthesis; ubiquinone biosynthesis. Functionally, removes the pyruvyl group from chorismate, with concomitant aromatization of the ring, to provide 4-hydroxybenzoate (4HB) for the ubiquinone pathway. The chain is Probable chorismate pyruvate-lyase from Vibrio cholerae serotype O1 (strain ATCC 39315 / El Tor Inaba N16961).